The sequence spans 641 residues: Threonine--tRNA ligase (641 aa).

The TGS domain maps to 1-61 (MPAITLPDGS…DDDVQLEIVT (61 aa)). The segment at 242-533 (DHRRIGRAQN…LIEHYAGALP (292 aa)) is catalytic. Cys333, His384, and His510 together coordinate Zn(2+).

It belongs to the class-II aminoacyl-tRNA synthetase family. Homodimer. It depends on Zn(2+) as a cofactor.

The protein resides in the cytoplasm. It catalyses the reaction tRNA(Thr) + L-threonine + ATP = L-threonyl-tRNA(Thr) + AMP + diphosphate + H(+). Catalyzes the attachment of threonine to tRNA(Thr) in a two-step reaction: L-threonine is first activated by ATP to form Thr-AMP and then transferred to the acceptor end of tRNA(Thr). Also edits incorrectly charged L-seryl-tRNA(Thr). The polypeptide is Threonine--tRNA ligase (Alkalilimnicola ehrlichii (strain ATCC BAA-1101 / DSM 17681 / MLHE-1)).